A 276-amino-acid chain; its full sequence is Undecaprenyl-diphosphatase 1 (276 aa).

Transmembrane regions (helical) follow at residues 44 to 63, 85 to 105, 109 to 129, 183 to 203, 214 to 234, and 249 to 269; these read ALAF…IWEY, VNLL…ADLI, LFNP…MLWA, AATE…AVYS, GDFA…MLAV, and FAWY…LGMI.

It belongs to the UppP family.

The protein resides in the cell inner membrane. It carries out the reaction di-trans,octa-cis-undecaprenyl diphosphate + H2O = di-trans,octa-cis-undecaprenyl phosphate + phosphate + H(+). Catalyzes the dephosphorylation of undecaprenyl diphosphate (UPP). Confers resistance to bacitracin. This Stutzerimonas stutzeri (strain A1501) (Pseudomonas stutzeri) protein is Undecaprenyl-diphosphatase 1.